A 28-amino-acid chain; its full sequence is Conotoxin as14b (28 aa).

2 disulfides stabilise this stretch: cysteine 7-cysteine 27 and cysteine 11-cysteine 23.

The protein belongs to the conotoxin L superfamily. As to expression, expressed by the venom duct.

Its subcellular location is the secreted. Functionally, in vivo, intracranial injection elicits scratching and grooming activity in mice, and causes body and rear limb extension and tail curling immediately upon injection. The protein is Conotoxin as14b of Conus cancellatus (Cancellate cone).